The following is a 431-amino-acid chain: Beta-1,4-glucuronyltransferase 1 (431 aa).

Residues 1–11 (MHFSKKCSVFK) are Cytoplasmic-facing. Residues 12–32 (VVLSALLIVALLQLLYLSFLS) form a helical membrane-spanning segment. Over 33 to 431 (KLHGKQQRYK…AKYPTSPRRC (399 aa)) the chain is Lumenal. A glycan (N-linked (GlcNAc...) asparagine) is linked at Asn-216. Residues Asp-241 and Asp-243 each contribute to the Mn(2+) site. N-linked (GlcNAc...) asparagine glycosylation is present at Asn-314.

This sequence belongs to the glycosyltransferase 49 family. It depends on Mn(2+) as a cofactor.

Its subcellular location is the golgi apparatus membrane. It catalyses the reaction 3-O-[beta-D-Xyl-(1-&gt;4)-Rib-ol-P-Rib-ol-P-3-beta-D-GalNAc-(1-&gt;3)-beta-D-GlcNAc-(1-&gt;4)-(O-6-P-alpha-D-Man)]-Thr-[protein] + UDP-alpha-D-glucuronate = 3-O-[beta-D-GlcA-(1-&gt;3)-beta-D-Xyl-(1-&gt;4)-Rib-ol-P-Rib-ol-P-3-beta-D-GalNAc-(1-&gt;3)-beta-D-GlcNAc-(1-&gt;4)-(O-6-P-alpha-D-Man)]-Thr-[protein] + UDP + H(+). It participates in protein modification; protein glycosylation. Its function is as follows. Beta-1,4-glucuronyltransferase involved in O-mannosylation of alpha-dystroglycan (DAG1). Transfers a glucuronic acid (GlcA) residue onto a xylose (Xyl) acceptor to produce the glucuronyl-beta-1,4-xylose-beta disaccharide primer, which is further elongated by LARGE, during synthesis of phosphorylated O-mannosyl glycan. Phosphorylated O-mannosyl glycan is a carbohydrate structure present in alpha-dystroglycan (DAG1), which is required for binding laminin G-like domain-containing extracellular proteins with high affinity. Required for axon guidance; via its function in O-mannosylation of alpha-dystroglycan (DAG1). The polypeptide is Beta-1,4-glucuronyltransferase 1 (Danio rerio (Zebrafish)).